The chain runs to 208 residues: N-(5'-phosphoribosyl)anthranilate isomerase (208 aa).

This sequence belongs to the TrpF family.

It carries out the reaction N-(5-phospho-beta-D-ribosyl)anthranilate = 1-(2-carboxyphenylamino)-1-deoxy-D-ribulose 5-phosphate. Its pathway is amino-acid biosynthesis; L-tryptophan biosynthesis; L-tryptophan from chorismate: step 3/5. The chain is N-(5'-phosphoribosyl)anthranilate isomerase from Neisseria meningitidis serogroup A / serotype 4A (strain DSM 15465 / Z2491).